A 411-amino-acid chain; its full sequence is Ferrochelatase, mitochondrial (411 aa).

The transit peptide at 1 to 41 directs the protein to the mitochondrion; it reads MAAFRAAHRLLGHILRNESSAGLVTQRWSSSAAVASVPKSS. The segment at 34-55 is disordered; the sequence is VASVPKSSDPKPHAQPDKRKPK. The span at 41–51 shows a compositional bias: basic and acidic residues; that stretch reads SDPKPHAQPDK. Arg102, Tyr110, and Ser117 together coordinate protoporphyrin IX. Cys183 contacts [2Fe-2S] cluster. Residues His217 and Asp370 contribute to the active site. The [2Fe-2S] cluster site is built by Cys390, Cys393, and Cys398.

It belongs to the ferrochelatase family. As to quaternary structure, homodimer. Homotetramer. The cofactor is [2Fe-2S] cluster.

The protein localises to the mitochondrion inner membrane. It carries out the reaction heme b + 2 H(+) = protoporphyrin IX + Fe(2+). It functions in the pathway porphyrin-containing compound metabolism; protoheme biosynthesis; protoheme from protoporphyrin-IX: step 1/1. In terms of biological role, catalyzes the ferrous insertion into protoporphyrin IX. The chain is Ferrochelatase, mitochondrial from Xenopus laevis (African clawed frog).